The sequence spans 353 residues: Rhodopsin (353 aa).

The Extracellular segment spans residues 1-36 (MNGTEGPYFYIPMVNTTGIVRSPYEYPQYYLVNPAA). Residues asparagine 2 and asparagine 15 are each glycosylated (N-linked (GlcNAc...) asparagine). Residues 37–61 (YAALGAYMFLLILIGFPVNFLTLYV) traverse the membrane as a helical segment. Topologically, residues 62–73 (TIEHKKLRTPLN) are cytoplasmic. A helical membrane pass occupies residues 74 to 96 (YILLNLAVADLFMVFGGFTTTMY). The Extracellular segment spans residues 97-110 (TSMHGYFVLGRLGC). The cysteines at positions 110 and 187 are disulfide-linked. A helical transmembrane segment spans residues 111-133 (NLEGFFATLGGEIALWSLVVLAV). Residues 134 to 136 (ERW) carry the 'Ionic lock' involved in activated form stabilization motif. Over 134-152 (ERWMVVCKPISNFRFGEDH) the chain is Cytoplasmic. A helical membrane pass occupies residues 153–173 (AIMGLAFTWVMAAACAVPPLV). Residues 174-202 (GWSRYIPEGMQCSCGIDYYTRAEGFNNES) lie on the Extracellular side of the membrane. Asparagine 200 is a glycosylation site (N-linked (GlcNAc...) asparagine). A helical transmembrane segment spans residues 203–224 (FVIYMFVCHFLIPLVVVFFCYG). At 225-252 (RLLCAVKEAAAAQQESETTQRAEREVSR) the chain is on the cytoplasmic side. Residues 253–274 (MVVIMVVAFLVCWCPYAGVAWY) form a helical membrane-spanning segment. The Extracellular segment spans residues 275-286 (IFTHQGSEFGPL). Residues 287 to 308 (FMTFPAFFAKSSSIYNPMIYIC) traverse the membrane as a helical segment. Lysine 296 carries the post-translational modification N6-(retinylidene)lysine. At 309–353 (MNKQFRQCMITTLCCGKNPFEEEEGASTTSKTEASSVSSSSVSPA) the chain is on the cytoplasmic side. Residues cysteine 322 and cysteine 323 are each lipidated (S-palmitoyl cysteine). The interval 329 to 353 (EEEEGASTTSKTEASSVSSSSVSPA) is disordered. A compositionally biased stretch (low complexity) spans 334 to 353 (ASTTSKTEASSVSSSSVSPA).

It belongs to the G-protein coupled receptor 1 family. Opsin subfamily. In terms of processing, phosphorylated on some or all of the serine and threonine residues present in the C-terminal region. Post-translationally, contains one covalently linked retinal chromophore.

Its subcellular location is the membrane. It is found in the cell projection. The protein localises to the cilium. It localises to the photoreceptor outer segment. Functionally, photoreceptor required for image-forming vision at low light intensity. While most salt water fish species use retinal as chromophore, most freshwater fish use 3-dehydroretinal, or a mixture of retinal and 3-dehydroretinal. Light-induced isomerization of 11-cis to all-trans retinal triggers a conformational change that activates signaling via G-proteins. Subsequent receptor phosphorylation mediates displacement of the bound G-protein alpha subunit by arrestin and terminates signaling. This Chelon auratus (Golden grey mullet) protein is Rhodopsin (rho).